The primary structure comprises 144 residues: UPF0735 ACT domain-containing protein LSEI_1046 (144 aa).

The ACT domain maps to 68–143; that stretch reads VISLMLHHDR…GVSDVHLVSV (76 aa).

Belongs to the UPF0735 family.

This is UPF0735 ACT domain-containing protein LSEI_1046 from Lacticaseibacillus paracasei (strain ATCC 334 / BCRC 17002 / CCUG 31169 / CIP 107868 / KCTC 3260 / NRRL B-441) (Lactobacillus paracasei).